Here is a 118-residue protein sequence, read N- to C-terminus: Large ribosomal subunit protein uL22 (118 aa).

Belongs to the universal ribosomal protein uL22 family. Part of the 50S ribosomal subunit.

Its function is as follows. This protein binds specifically to 23S rRNA; its binding is stimulated by other ribosomal proteins, e.g. L4, L17, and L20. It is important during the early stages of 50S assembly. It makes multiple contacts with different domains of the 23S rRNA in the assembled 50S subunit and ribosome. Functionally, the globular domain of the protein is located near the polypeptide exit tunnel on the outside of the subunit, while an extended beta-hairpin is found that lines the wall of the exit tunnel in the center of the 70S ribosome. This is Large ribosomal subunit protein uL22 from Leuconostoc mesenteroides subsp. mesenteroides (strain ATCC 8293 / DSM 20343 / BCRC 11652 / CCM 1803 / JCM 6124 / NCDO 523 / NBRC 100496 / NCIMB 8023 / NCTC 12954 / NRRL B-1118 / 37Y).